The sequence spans 175 residues: Glutamyl-tRNA(Gln) amidotransferase subunit F, mitochondrial (175 aa).

The N-terminal 19 residues, 1–19 (MLKVSARHAPVLRLPRRFY), are a transit peptide targeting the mitochondrion.

This sequence belongs to the GatF family. Subunit of the heterotrimeric GatFAB amidotransferase (AdT) complex, composed of A, B and F subunits.

It localises to the mitochondrion inner membrane. The enzyme catalyses L-glutamyl-tRNA(Gln) + L-glutamine + ATP + H2O = L-glutaminyl-tRNA(Gln) + L-glutamate + ADP + phosphate + H(+). Allows the formation of correctly charged Gln-tRNA(Gln) through the transamidation of misacylated Glu-tRNA(Gln) in the mitochondria. The reaction takes place in the presence of glutamine and ATP through an activated gamma-phospho-Glu-tRNA(Gln). Required for proper protein synthesis within the mitochondrion. This Lachancea thermotolerans (strain ATCC 56472 / CBS 6340 / NRRL Y-8284) (Yeast) protein is Glutamyl-tRNA(Gln) amidotransferase subunit F, mitochondrial.